The primary structure comprises 806 residues: Centrosomal protein of 85 kDa-like (806 aa).

3 disordered regions span residues 1–27 (MWGR…AGSD), 51–89 (NNHL…LSFK), and 101–146 (HVMP…SSLD). Ser15 carries the phosphoserine modification. The span at 60–74 (TSDSGDTGIGTSCSD) shows a compositional bias: polar residues. Basic and acidic residues predominate over residues 135–146 (DHSRGERDSSLD). The residue at position 207 (Ser207) is a Phosphoserine. The disordered stretch occupies residues 308–353 (PLEGRTTDDSYSLAPWQQPQTEEFQQGSETPMQVLTGSSRQSYSPP). The span at 322–351 (PWQQPQTEEFQQGSETPMQVLTGSSRQSYS) shows a compositional bias: polar residues. The stretch at 442–644 (QEELEQKLAS…ILEIQSMQGK (203 aa)) forms a coiled coil.

It belongs to the CEP85 family.

It is found in the cytoplasm. The protein localises to the cytoskeleton. Its subcellular location is the microtubule organizing center. The protein resides in the centrosome. In terms of biological role, plays an essential role in neuronal cell migration. The chain is Centrosomal protein of 85 kDa-like from Mus musculus (Mouse).